Here is a 252-residue protein sequence, read N- to C-terminus: Triosephosphate isomerase (252 aa).

10–12 contacts substrate; sequence NWK. Catalysis depends on histidine 96, which acts as the Electrophile. Glutamate 168 acts as the Proton acceptor in catalysis. Residues glycine 174, serine 214, and 235-236 each bind substrate; that span reads GG.

This sequence belongs to the triosephosphate isomerase family. In terms of assembly, homodimer.

It localises to the cytoplasm. The enzyme catalyses D-glyceraldehyde 3-phosphate = dihydroxyacetone phosphate. It participates in carbohydrate biosynthesis; gluconeogenesis. It functions in the pathway carbohydrate degradation; glycolysis; D-glyceraldehyde 3-phosphate from glycerone phosphate: step 1/1. Its function is as follows. Involved in the gluconeogenesis. Catalyzes stereospecifically the conversion of dihydroxyacetone phosphate (DHAP) to D-glyceraldehyde-3-phosphate (G3P). This is Triosephosphate isomerase from Lactococcus lactis subsp. lactis (strain IL1403) (Streptococcus lactis).